We begin with the raw amino-acid sequence, 132 residues long: Large ribosomal subunit protein bL17 (132 aa).

This sequence belongs to the bacterial ribosomal protein bL17 family. As to quaternary structure, part of the 50S ribosomal subunit. Contacts protein L32.

The chain is Large ribosomal subunit protein bL17 from Polaromonas sp. (strain JS666 / ATCC BAA-500).